We begin with the raw amino-acid sequence, 112 residues long: Chaperone NapD (112 aa).

This sequence belongs to the NapD family. As to quaternary structure, interacts with the cytoplasmic NapA precursor.

It localises to the cytoplasm. In terms of biological role, chaperone for NapA, the catalytic subunit of the periplasmic nitrate reductase. It binds directly and specifically to the twin-arginine signal peptide of NapA, preventing premature interaction with the Tat translocase and premature export. This chain is Chaperone NapD, found in Paracoccus pantotrophus (Thiosphaera pantotropha).